The following is a 319-amino-acid chain: Acetyl-coenzyme A carboxylase carboxyl transferase subunit alpha (319 aa).

In terms of domain architecture, CoA carboxyltransferase C-terminal spans 38-292 (ALDKKAADLL…GKAIASMLAG (255 aa)).

The protein belongs to the AccA family. Acetyl-CoA carboxylase is a heterohexamer composed of biotin carboxyl carrier protein (AccB), biotin carboxylase (AccC) and two subunits each of ACCase subunit alpha (AccA) and ACCase subunit beta (AccD).

Its subcellular location is the cytoplasm. The enzyme catalyses N(6)-carboxybiotinyl-L-lysyl-[protein] + acetyl-CoA = N(6)-biotinyl-L-lysyl-[protein] + malonyl-CoA. It participates in lipid metabolism; malonyl-CoA biosynthesis; malonyl-CoA from acetyl-CoA: step 1/1. In terms of biological role, component of the acetyl coenzyme A carboxylase (ACC) complex. First, biotin carboxylase catalyzes the carboxylation of biotin on its carrier protein (BCCP) and then the CO(2) group is transferred by the carboxyltransferase to acetyl-CoA to form malonyl-CoA. In Jannaschia sp. (strain CCS1), this protein is Acetyl-coenzyme A carboxylase carboxyl transferase subunit alpha.